The chain runs to 805 residues: Leucine--tRNA ligase (805 aa).

Residues 40 to 51 (PYPSGAGLHVGH) carry the 'HIGH' region motif. The 'KMSKS' region signature appears at 576–580 (KMSKS). Lys-579 is an ATP binding site.

The protein belongs to the class-I aminoacyl-tRNA synthetase family.

The protein resides in the cytoplasm. It catalyses the reaction tRNA(Leu) + L-leucine + ATP = L-leucyl-tRNA(Leu) + AMP + diphosphate. The chain is Leucine--tRNA ligase from Brevibacillus brevis (strain 47 / JCM 6285 / NBRC 100599).